The primary structure comprises 168 residues: Cyanate hydratase (168 aa).

Residues Arg-91, Glu-94, and Ser-117 contribute to the active site.

The protein belongs to the cyanase family.

The catalysed reaction is cyanate + hydrogencarbonate + 3 H(+) = NH4(+) + 2 CO2. Catalyzes the reaction of cyanate with bicarbonate to produce ammonia and carbon dioxide. This Arabidopsis thaliana (Mouse-ear cress) protein is Cyanate hydratase.